We begin with the raw amino-acid sequence, 180 residues long: tRNA (cytidine(56)-2'-O)-methyltransferase (180 aa).

S-adenosyl-L-methionine contacts are provided by residues L85, 114-118, and 132-139; these read GAEKV and VGNQPHSE.

This sequence belongs to the aTrm56 family. Homodimer.

It is found in the cytoplasm. The catalysed reaction is cytidine(56) in tRNA + S-adenosyl-L-methionine = 2'-O-methylcytidine(56) in tRNA + S-adenosyl-L-homocysteine + H(+). Its function is as follows. Specifically catalyzes the AdoMet-dependent 2'-O-ribose methylation of cytidine at position 56 in tRNAs. The polypeptide is tRNA (cytidine(56)-2'-O)-methyltransferase (Thermococcus kodakarensis (strain ATCC BAA-918 / JCM 12380 / KOD1) (Pyrococcus kodakaraensis (strain KOD1))).